Reading from the N-terminus, the 553-residue chain is Efflux pump mlcE (553 aa).

Residues Met1 to Ser19 show a composition bias toward basic and acidic residues. Positions Met1 to Ser29 are disordered. Asn21 is a glycosylation site (N-linked (GlcNAc...) asparagine). The next 13 helical transmembrane spans lie at Leu41–Val61, Val77–Gly96, Leu101–Leu121, Ala136–Ala156, Val164–Gly184, Cys196–Ile216, Leu245–Gly265, Ser273–Trp293, Leu319–Phe339, Val352–Ile372, Gly376–Val396, Ala440–Phe460, and Thr516–Trp536. Asn543 carries an N-linked (GlcNAc...) asparagine glycan.

Belongs to the major facilitator superfamily. TCR/Tet family.

The protein resides in the membrane. Its function is as follows. Efflux pump; part of the gene cluster that mediates the biosynthesis of compactin, also known as mevastatin or ML-236B, and which acts as a potent competitive inhibitor of HMG-CoA reductase. The polypeptide is Efflux pump mlcE (Penicillium citrinum).